The following is a 354-amino-acid chain: MEKYLIKMPIKSKANAVPEEKAVVKKGTPKMTGKVTKKDTPKELKDKENAGEDNTPKQTKGRPGRPAVKRKNLDNPDAKAEKKATEEENPPKRRSSRLTRSTRSMAEDGSPSPEKEKPEKLPFIKYKGAIKYYTENQDIAASADDVLQWVEKQKDEVVPMAFDMEWPFSFQTGPGKSAVIQICVDEKCCYIYQLTNLKKLPAVLVALINHPKVRLHGVNIKNDFRKLARDFPEVSAEPLIEKCVDLGLWCNEVCETGGRWSLERLTNFIAKKAMDKSKKVRMSKWHVIPLDENQLMYAAIDVYIGQVIYRELERREKAKIKNEAEFKENNGEAAFKAMKTLGETFLTKINEVTL.

A disordered region spans residues 1–120 (MEKYLIKMPI…PSPEKEKPEK (120 aa)). The span at 36-50 (TKKDTPKELKDKENA) shows a compositional bias: basic and acidic residues. Over residues 59 to 70 (TKGRPGRPAVKR) the composition is skewed to basic residues. Residues 71 to 91 (KNLDNPDAKAEKKATEEENPP) show a composition bias toward basic and acidic residues. Phosphoserine is present on residues serine 104, serine 110, and serine 112. The region spanning 146–314 (VLQWVEKQKD…GQVIYRELER (169 aa)) is the 3'-5' exonuclease domain. Mg(2+) contacts are provided by aspartate 163, glutamate 165, and aspartate 301.

This sequence belongs to the WRNexo family.

The protein resides in the nucleus. In terms of biological role, has exonuclease activity on both single-stranded and duplex templates bearing overhangs, but not blunt ended duplex DNA, and cleaves in a 3'-5' direction. Essential for the formation of DNA replication focal centers. Has an important role in maintaining genome stability. The sequence is that of 3'-5' exonuclease from Drosophila yakuba (Fruit fly).